Here is a 414-residue protein sequence, read N- to C-terminus: Putative gustatory receptor 47b (414 aa).

The Cytoplasmic segment spans residues 1 to 5 (MQRDD). The helical transmembrane segment at 6–26 (GFVYCYGNLYSLLLYWGLVTI) threads the bilayer. Residues 27-40 (RVRSPDRGGAFSNR) lie on the Extracellular side of the membrane. The chain crosses the membrane as a helical span at residues 41–61 (WTVCYALFTRSFMVICFMATV). The Cytoplasmic portion of the chain corresponds to 62 to 142 (MTKLRDPEMS…QWNYRRARLK (81 aa)). Residues 143-163 (YWYGTVIVGFCFFSFSISLIF) form a helical membrane-spanning segment. At 164-182 (DTTRCTCGIPSTLLMAFTY) the chain is on the extracellular side. Residues 183 to 203 (TLLTSSVGLLGFVHIGIMDFI) traverse the membrane as a helical segment. At 204–249 (RVRLRLVQQLLHQLYQADDSSEVHERIAYLFEMSKRCSFLLAELNG) the chain is on the cytoplasmic side. Residues 250–270 (VFGFAAAAGIFYDFTIMTCFV) form a helical membrane-spanning segment. The Extracellular portion of the chain corresponds to 271–291 (YVICQKLLEREPWDPEYVYML). A helical membrane pass occupies residues 292 to 312 (LHVAIHTYKVVITSTYGYLLL). Residues 313–364 (REKRNCMHLLSQYSRYFSGQDVARRKTEDFQHWRMHNRQAAMVGSTTLLSVS) are Cytoplasmic-facing. A helical membrane pass occupies residues 365 to 385 (TIYLVYNGMANYVIILVQLLF). At 386 to 414 (QQQQIKDHQLTSGKDVDIVGPMGPITHMD) the chain is on the extracellular side.

Belongs to the insect chemoreceptor superfamily. Gustatory receptor (GR) family. Gr57a subfamily. In terms of tissue distribution, expressed in neurons of the terminal external chemosensory organ of larvae.

The protein resides in the cell membrane. Its function is as follows. Probable gustatory receptor which mediates acceptance or avoidance behavior, depending on its substrates. The sequence is that of Putative gustatory receptor 47b (Gr47b) from Drosophila melanogaster (Fruit fly).